The primary structure comprises 180 residues: Large ribosomal subunit protein uL5 (180 aa).

Belongs to the universal ribosomal protein uL5 family. As to quaternary structure, part of the 50S ribosomal subunit; part of the 5S rRNA/L5/L18/L25 subcomplex. Contacts the 5S rRNA and the P site tRNA. Forms a bridge to the 30S subunit in the 70S ribosome.

In terms of biological role, this is one of the proteins that bind and probably mediate the attachment of the 5S RNA into the large ribosomal subunit, where it forms part of the central protuberance. In the 70S ribosome it contacts protein S13 of the 30S subunit (bridge B1b), connecting the 2 subunits; this bridge is implicated in subunit movement. Contacts the P site tRNA; the 5S rRNA and some of its associated proteins might help stabilize positioning of ribosome-bound tRNAs. The sequence is that of Large ribosomal subunit protein uL5 from Streptococcus sanguinis (strain SK36).